We begin with the raw amino-acid sequence, 334 residues long: Phosphate acyltransferase (334 aa).

The protein belongs to the PlsX family. As to quaternary structure, homodimer. Probably interacts with PlsY.

It localises to the cytoplasm. It catalyses the reaction a fatty acyl-[ACP] + phosphate = an acyl phosphate + holo-[ACP]. The protein operates within lipid metabolism; phospholipid metabolism. In terms of biological role, catalyzes the reversible formation of acyl-phosphate (acyl-PO(4)) from acyl-[acyl-carrier-protein] (acyl-ACP). This enzyme utilizes acyl-ACP as fatty acyl donor, but not acyl-CoA. The sequence is that of Phosphate acyltransferase from Streptococcus thermophilus (strain ATCC BAA-491 / LMD-9).